Here is a 508-residue protein sequence, read N- to C-terminus: ATP synthase subunit alpha (508 aa).

171-178 (GDRQTGKT) provides a ligand contact to ATP.

This sequence belongs to the ATPase alpha/beta chains family. F-type ATPases have 2 components, CF(1) - the catalytic core - and CF(0) - the membrane proton channel. CF(1) has five subunits: alpha(3), beta(3), gamma(1), delta(1), epsilon(1). CF(0) has three main subunits: a(1), b(2) and c(9-12). The alpha and beta chains form an alternating ring which encloses part of the gamma chain. CF(1) is attached to CF(0) by a central stalk formed by the gamma and epsilon chains, while a peripheral stalk is formed by the delta and b chains.

The protein localises to the cell membrane. The enzyme catalyses ATP + H2O + 4 H(+)(in) = ADP + phosphate + 5 H(+)(out). Functionally, produces ATP from ADP in the presence of a proton gradient across the membrane. The alpha chain is a regulatory subunit. The protein is ATP synthase subunit alpha of Protochlamydia amoebophila (strain UWE25).